The primary structure comprises 136 residues: Ig heavy chain V region BCL1 (136 aa).

Residues 1 to 19 (MGWSCIIFFLVATATGVHS) form the signal peptide. The 116-residue stretch at 20-135 (QVQLQQSGPE…WGQGTTLTVS (116 aa)) folds into the Ig-like domain.

The polypeptide is Ig heavy chain V region BCL1 (Mus musculus (Mouse)).